The primary structure comprises 1733 residues: Gag-Pol polyprotein (1733 aa).

Glycine 2 carries N-myristoyl glycine; by host lipidation. The short motif at 109–112 is the PTAP/PSAP motif element; it reads PTAP. Residues 128–132 carry the LYPX(n)L motif motif; sequence LYPAL. 3 disordered regions span residues 139–218, 449–497, and 511–549; these read KPPK…LRMG, KEER…RPQL, and WAKD…PEPR. Positions 161–164 match the PPXY motif motif; the sequence is PPPY. Phosphoserine; by host is present on serine 190. The stretch at 436 to 476 forms a coiled coil; that stretch reads EEREERIRREIEEKEERRRAEDEQRERERDRRRHREMSKLL. Basic and acidic residues-rich tracts occupy residues 449–464 and 484–497; these read KEER…ERER and RQDR…RPQL. The CCHC-type zinc-finger motif lies at 500–517; sequence DQCAYCKEKGHWAKDCPK. A compositionally biased stretch (low complexity) spans 526 to 535; sequence RPQTSLLTLG. The Peptidase A2 domain occupies 559–629; it reads VTFLVDTGAQ…CPYPLLGRDL (71 aa). Aspartate 564 functions as the Protease; shared with dimeric partner in the catalytic mechanism. RNA-binding residues include tyrosine 721, aspartate 771, arginine 773, and proline 787. The 192-residue stretch at 739–930 folds into the Reverse transcriptase domain; the sequence is LDQGILVPCQ…KQVKYLGYLL (192 aa). Aspartate 807 contributes to the Mg(2+) binding site. Positions 851 and 853 each coordinate RNA. Residues aspartate 881 and aspartate 882 each coordinate Mg(2+). Positions 941, 955, 958, and 966 each coordinate DNA. RNA is bound by residues lysine 1054 and lysine 1055. Residue tryptophan 1063 coordinates DNA. Lysine 1082 serves as a coordination point for RNA. Arginine 1113 serves as a coordination point for DNA. The RNase H type-1 domain occupies 1172–1318; the sequence is PDADYTWYTD…ADQAAREAAM (147 aa). Aspartate 1181 contacts Mg(2+). The RNA site is built by serine 1184 and leucine 1186. 3 residues coordinate DNA: glutamine 1187, serine 1214, and glutamine 1216. Glutamate 1219 and aspartate 1240 together coordinate Mg(2+). Residues arginine 1242 and arginine 1266 each coordinate RNA. 3 residues coordinate Mg(2+): aspartate 1310, aspartate 1453, and aspartate 1512. Positions 1442–1600 constitute an Integrase catalytic domain; the sequence is RGHRPGTHWE…TPYEILYGAP (159 aa).

In terms of assembly, homohexamer, that further associates as homomultimer. The virus core is composed of a lattice formed from hexagonal rings, each containing six capsid monomers. The protease is a homodimer, whose active site consists of two apposed aspartic acid residues. The reverse transcriptase is a monomer. As to quaternary structure, interacts (via PPXY motif) with host NEDD4. Interacts (via PSAP motif) with host TSG101. Interacts (via LYPX(n)L motif) with host PDCD6IP. The reverse transcriptase is a monomer (Potential). Interacts (via RNase domains) with host release factor ETF1; this interaction is essential for translational readthrough of amber codon between viral gag and pol genes, as well as for viral replication. In terms of assembly, homodimer. The cofactor is Mg(2+). Mn(2+) serves as cofactor. Specific enzymatic cleavages by the viral protease yield mature proteins. The protease is released by autocatalytic cleavage. The polyprotein is cleaved during and after budding, this process is termed maturation. In terms of processing, sumoylated; which is required for virus replication. Post-translationally, phosphorylated on serine residues.

It is found in the host cell membrane. Its subcellular location is the virion. The enzyme catalyses DNA(n) + a 2'-deoxyribonucleoside 5'-triphosphate = DNA(n+1) + diphosphate. It carries out the reaction Endonucleolytic cleavage to 5'-phosphomonoester.. Its function is as follows. Plays a role in budding and is processed by the viral protease during virion maturation outside the cell. During budding, it recruits, in a PPXY-dependent or independent manner, Nedd4-like ubiquitin ligases that conjugate ubiquitin molecules to Gag, or to Gag binding host factors. Interaction with HECT ubiquitin ligases probably link the viral protein to the host ESCRT pathway and facilitate release. In terms of biological role, targets Gag and gag-pol polyproteins to the plasma membrane via a multipartite membrane binding signal, that includes its myristoylated N-terminus. Also mediates nuclear localization of the pre-integration complex. Functionally, forms the spherical core of the virion that encapsulates the genomic RNA-nucleocapsid complex. Involved in the packaging and encapsidation of two copies of the genome. Binds with high affinity to conserved UCUG elements within the packaging signal, located near the 5'-end of the genome. This binding is dependent on genome dimerization. Acts as a nucleic acid chaperone which is involved in rearrangement of nucleic acid secondary structures during gRNA retrotranscription. Its function is as follows. The aspartyl protease mediates proteolytic cleavages of Gag and Gag-Pol polyproteins during or shortly after the release of the virion from the plasma membrane. Cleavages take place as an ordered, step-wise cascade to yield mature proteins. This process is called maturation. Displays maximal activity during the budding process just prior to particle release from the cell. In terms of biological role, RT is a multifunctional enzyme that converts the viral dimeric RNA genome into dsDNA in the cytoplasm, shortly after virus entry into the cell. This enzyme displays a DNA polymerase activity that can copy either DNA or RNA templates, and a ribonuclease H (RNase H) activity that cleaves the RNA strand of RNA-DNA heteroduplexes in a partially processive 3' to 5' endonucleasic mode. Conversion of viral genomic RNA into dsDNA requires many steps. A tRNA binds to the primer-binding site (PBS) situated at the 5' end of the viral RNA. RT uses the 3' end of the tRNA primer to perform a short round of RNA-dependent minus-strand DNA synthesis. The reading proceeds through the U5 region and ends after the repeated (R) region which is present at both ends of viral RNA. The portion of the RNA-DNA heteroduplex is digested by the RNase H, resulting in a ssDNA product attached to the tRNA primer. This ssDNA/tRNA hybridizes with the identical R region situated at the 3' end of viral RNA. This template exchange, known as minus-strand DNA strong stop transfer, can be either intra- or intermolecular. RT uses the 3' end of this newly synthesized short ssDNA to perform the RNA-dependent minus-strand DNA synthesis of the whole template. RNase H digests the RNA template except for a polypurine tract (PPT) situated at the 5' end of the genome. It is not clear if both polymerase and RNase H activities are simultaneous. RNase H probably can proceed both in a polymerase-dependent (RNA cut into small fragments by the same RT performing DNA synthesis) and a polymerase-independent mode (cleavage of remaining RNA fragments by free RTs). Secondly, RT performs DNA-directed plus-strand DNA synthesis using the PPT that has not been removed by RNase H as primers. PPT and tRNA primers are then removed by RNase H. The 3' and 5' ssDNA PBS regions hybridize to form a circular dsDNA intermediate. Strand displacement synthesis by RT to the PBS and PPT ends produces a blunt ended, linear dsDNA copy of the viral genome that includes long terminal repeats (LTRs) at both ends. Functionally, catalyzes viral DNA integration into the host chromosome, by performing a series of DNA cutting and joining reactions. This enzyme activity takes place after virion entry into a cell and reverse transcription of the RNA genome in dsDNA. The first step in the integration process is 3' processing. This step requires a complex comprising the viral genome, matrix protein and integrase. This complex is called the pre-integration complex (PIC). The integrase protein removes 2 nucleotides from each 3' end of the viral DNA, leaving recessed CA OH's at the 3' ends. In the second step that requires cell division, the PIC enters cell nucleus. In the third step, termed strand transfer, the integrase protein joins the previously processed 3' ends to the 5' ends of strands of target cellular DNA at the site of integration. The last step is viral DNA integration into host chromosome. The polypeptide is Gag-Pol polyprotein (gag-pol) (Homo sapiens (Human)).